Reading from the N-terminus, the 747-residue chain is MGNRSMGREDTLGVLPSLLFCKMLRFLKRPLVVTIDINLNLVALTVLGLLTRLWQLSYPRAVVFDEVYYGQYISFYMKRVFFLDDSGPPFGHMLLALGGWLGGFDGNFLWNRIGAEYSSNVPVWSLRLLPALAGALSVPMAYQIVLELHFSHCTAMGAALLMLIENALITQSRLMLLESILIFFNLLAVLSYLKFFNSQTHSPFSVHWWLWLMLTGVSCSCAVGIKYMGIFTYLLVLSIAAVHAWHLIGDQTLSNICVLSHLLARAVALLVVPVFLYLLFFYVHLMLLYRSGPHDQIMSSAFQASLEGGLARITQGQPLEVAFGSQVTLKSVSGKPLPCWLHSHKNTYPMIYENGRGSSHQQQVTCYPFKDINNWWIVKDPGRHQLVVNNPPRPVRHGDIVQLVHGMTTRLLNTHDVAAPLSPHSQEVSCYIDYNISMPAQNLWKLDIVNRESNQDTWKTILSEVRFVHVNTSAILKLSGAHLPDWGFRQLEVVGEKLSLGPHESMVWNVEEHRYGRGHEQKERELELHSPTQHDISRNLSFMARFSELQWKMLTLKNEDLEHQYSSTPLEWLTLDTNIAYWLHPRTSAQIHLLGNIVIWTSASLATVAYTLLFFWYLLRRRRNICDLPEDAWSHWVLAGALCIGGWALNYLPFFLMERMLFLYHYLPALTFQILLLPIVMQHASDHLCRSQLQRNVFSALVVAWYSSACHVSNMLRPLTYGDTSLSPGELRALRWKDSWDILIRKY.

The next 7 membrane-spanning stretches (helical) occupy residues 30–50 (PLVVTIDINLNLVALTVLGLL), 90–110 (FGHMLLALGGWLGGFDGNFLW), 121–141 (VPVWSLRLLPALAGALSVPMA), 176–196 (LLESILIFFNLLAVLSYLKFF), 205–225 (SVHWWLWLMLTGVSCSCAVGI), 228–248 (MGIFTYLLVLSIAAVHAWHLI), and 267–287 (VALLVVPVFLYLLFFYVHLML). MIR domains lie at 318-381 (PLEV…VKDP), 392-449 (PRPV…LDIV), and 453-513 (SNQD…VEEH). Asparagine 435, asparagine 471, and asparagine 539 each carry an N-linked (GlcNAc...) asparagine glycan. Helical transmembrane passes span 597–617 (IVIWTSASLATVAYTLLFFWY), 636–656 (WVLAGALCIGGWALNYLPFFL), and 660–680 (MLFLYHYLPALTFQILLLPIV).

It belongs to the glycosyltransferase 39 family.

Its subcellular location is the endoplasmic reticulum membrane. The enzyme catalyses a di-trans,poly-cis-dolichyl beta-D-mannosyl phosphate + L-seryl-[protein] = 3-O-(alpha-D-mannosyl)-L-seryl-[protein] + a di-trans,poly-cis-dolichyl phosphate + H(+). It catalyses the reaction a di-trans,poly-cis-dolichyl beta-D-mannosyl phosphate + L-threonyl-[protein] = 3-O-(alpha-D-mannosyl)-L-threonyl-[protein] + a di-trans,poly-cis-dolichyl phosphate + H(+). It functions in the pathway protein modification; protein glycosylation. Functionally, transfers mannosyl residues to the hydroxyl group of serine or threonine residues. Coexpression of both POMT1 and POMT2 is necessary for enzyme activity, expression of either POMT1 or POMT2 alone is insufficient. Essentially dedicated to O-mannosylation of alpha-DAG1 and few other proteins but not of cadherins and protocaherins. This is Protein O-mannosyl-transferase 1 (Pomt1) from Rattus norvegicus (Rat).